The chain runs to 28 residues: Phospholipase A2 3 (28 aa).

Belongs to the phospholipase A2 family. Group I subfamily. It depends on Ca(2+) as a cofactor. As to expression, expressed by the venom gland.

It localises to the secreted. The enzyme catalyses a 1,2-diacyl-sn-glycero-3-phosphocholine + H2O = a 1-acyl-sn-glycero-3-phosphocholine + a fatty acid + H(+). Functionally, snake venom phospholipase A2 (PLA2) that inhibits neuromuscular transmission by blocking acetylcholine release from the nerve termini. PLA2 catalyzes the calcium-dependent hydrolysis of the 2-acyl groups in 3-sn-phosphoglycerides. The chain is Phospholipase A2 3 from Micrurus nigrocinctus (Central American coral snake).